The primary structure comprises 337 residues: Phosphoribosylformylglycinamidine cyclo-ligase (337 aa).

The protein belongs to the AIR synthase family.

The protein resides in the cytoplasm. It carries out the reaction 2-formamido-N(1)-(5-O-phospho-beta-D-ribosyl)acetamidine + ATP = 5-amino-1-(5-phospho-beta-D-ribosyl)imidazole + ADP + phosphate + H(+). Its pathway is purine metabolism; IMP biosynthesis via de novo pathway; 5-amino-1-(5-phospho-D-ribosyl)imidazole from N(2)-formyl-N(1)-(5-phospho-D-ribosyl)glycinamide: step 2/2. The sequence is that of Phosphoribosylformylglycinamidine cyclo-ligase from Pseudothermotoga lettingae (strain ATCC BAA-301 / DSM 14385 / NBRC 107922 / TMO) (Thermotoga lettingae).